A 349-amino-acid polypeptide reads, in one-letter code: Putative methylesterase 12, chloroplastic (349 aa).

A chloroplast-targeting transit peptide spans 1–77; it reads MGNRVICMKK…GSTSSRRGTL (77 aa). The interval 61 to 80 is disordered; that stretch reads GSMSRRIGSTSSRRGTLSDS. Residue Ser173 is the Acyl-ester intermediate of the active site. Residues Asp300 and His328 each act as charge relay system in the active site.

Belongs to the AB hydrolase superfamily. Methylesterase family.

The protein resides in the plastid. It is found in the chloroplast. Functionally, putative methylesterase. In Arabidopsis thaliana (Mouse-ear cress), this protein is Putative methylesterase 12, chloroplastic.